Reading from the N-terminus, the 2485-residue chain is Probable polyketide synthase 10 (2485 aa).

One can recognise a Ketosynthase family 3 (KS3) domain in the interval 8–447 (EDDIAIIGVG…GANCCIILSE (440 aa)). Catalysis depends on for beta-ketoacyl synthase activity residues Cys184, His325, and His363. The segment at 636 to 669 (GIEASFIVGHSLGEISAAHCSGMIDLETLCYIIY) is acyl/malonyl transferase. Catalysis depends on Ser646, which acts as the For acyl/malonyl transferase activity. Positions 930 to 1054 (PPITILGNES…GNFHISNNLF (125 aa)) are N-terminal hotdog fold. One can recognise a PKS/mFAS DH domain in the interval 930–1220 (PPITILGNES…SKSLTPIQDP (291 aa)). The active-site Proton acceptor; for dehydratase activity is His964. The interval 1071–1220 (NYSLIERDDL…SKSLTPIQDP (150 aa)) is C-terminal hotdog fold. Residue Asp1134 is the Proton donor; for dehydratase activity of the active site. In terms of domain architecture, Carrier spans 2410–2485 (ESNKGIDGLL…NQLIKFLNKK (76 aa)). Ser2447 is subject to O-(pantetheine 4'-phosphoryl)serine.

Pantetheine 4'-phosphate is required as a cofactor.

Its function is as follows. Probable polyketide synthase. The sequence is that of Probable polyketide synthase 10 (pks10) from Dictyostelium discoideum (Social amoeba).